The chain runs to 529 residues: Basal body-orientation factor 1 (529 aa).

Basic residues predominate over residues methionine 1 to serine 13. Positions methionine 1–isoleucine 22 are disordered. Coiled coils occupy residues leucine 85–lysine 201 and valine 271–arginine 361.

Belongs to the BBOF1 family. As to quaternary structure, interacts with MNS1 and ODF2.

It is found in the cytoplasm. The protein resides in the cytoskeleton. It localises to the cilium basal body. The protein localises to the flagellum axoneme. Plays an essential role in sperm motility and male fertility by stabilizing the sperm flagellar axonemal structure. May be required for the stability of ODF2 and MANS1 proteins. Dispensable for the assembly and function of motile cilia. The chain is Basal body-orientation factor 1 from Homo sapiens (Human).